Reading from the N-terminus, the 391-residue chain is UDP-galactose transporter homolog 1 (391 aa).

5 helical membrane passes run 3–23, 52–72, 126–147, 178–198, and 207–227; these read LLQL…WGLL, LFLN…YLLV, YILI…LRYI, YKYA…AFAP, and APES…VLDG. Residue asparagine 230 is glycosylated (N-linked (GlcNAc...) asparagine). The next 4 helical transmembrane spans lie at 250 to 270, 298 to 318, 323 to 343, and 347 to 367; these read MMLV…TLPI, DIIA…ETLE, LTLV…SVVV, and ELSK…GIEA.

It belongs to the nucleotide-sugar transporter family. SLC35B subfamily.

It is found in the endoplasmic reticulum membrane. Its function is as follows. May be involved in specific transport of UDP-Gal from the cytosol to the Golgi lumen. Involved in the maintenance of optimal conditions for the folding of secretory pathway proteins in the endoplasmic reticulum. The polypeptide is UDP-galactose transporter homolog 1 (HUT1) (Mycosarcoma maydis (Corn smut fungus)).